The primary structure comprises 374 residues: Methionine import ATP-binding protein MetN 2 (374 aa).

Positions 32 to 271 (VRFVGLGKTY…PQHEVSQTLL (240 aa)) constitute an ABC transporter domain. 68 to 75 (GRSGAGKS) is a binding site for ATP.

This sequence belongs to the ABC transporter superfamily. Methionine importer (TC 3.A.1.24) family. The complex is composed of two ATP-binding proteins (MetN), two transmembrane proteins (MetI) and a solute-binding protein (MetQ).

The protein localises to the cell inner membrane. The enzyme catalyses L-methionine(out) + ATP + H2O = L-methionine(in) + ADP + phosphate + H(+). The catalysed reaction is D-methionine(out) + ATP + H2O = D-methionine(in) + ADP + phosphate + H(+). Functionally, part of the ABC transporter complex MetNIQ involved in methionine import. Responsible for energy coupling to the transport system. This is Methionine import ATP-binding protein MetN 2 from Pseudomonas fluorescens (strain Pf0-1).